Reading from the N-terminus, the 407-residue chain is Polygalacturonase (407 aa).

An N-terminal signal peptide occupies residues 1-26; the sequence is MAPHLNIVPSMFVLLLLFISASKVQS. PbH1 repeat units follow at residues 180-206 and 207-228; these read CKNI…HMGK and SEGV…SIGD. The N-linked (GlcNAc...) asparagine glycan is linked to asparagine 182. The Proton donor role is filled by aspartate 221. A disulfide bridge links cysteine 223 with cysteine 240. Histidine 244 is a catalytic residue. 2 PbH1 repeats span residues 260 to 281 and 290 to 311; these read VEGI…RIKT and VSEI…LIDQ. Residues asparagine 267, asparagine 272, asparagine 302, and asparagine 331 are each glycosylated (N-linked (GlcNAc...) asparagine). 2 cysteine pairs are disulfide-bonded: cysteine 351–cysteine 357 and cysteine 379–cysteine 395. The stretch at 357 to 384 is one PbH1 5 repeat; the sequence is CQNVELADIDIKHNGAEPATSQCLNVKP.

It belongs to the glycosyl hydrolase 28 family. As to expression, pollen.

The protein resides in the secreted. It is found in the cell wall. The enzyme catalyses (1,4-alpha-D-galacturonosyl)n+m + H2O = (1,4-alpha-D-galacturonosyl)n + (1,4-alpha-D-galacturonosyl)m.. May function in the depolymerization of the pectin in its walls during pollen tube elongation, or in that of the pistil during pollination. This chain is Polygalacturonase (G9), found in Gossypium hirsutum (Upland cotton).